Here is a 201-residue protein sequence, read N- to C-terminus: Ribosomal RNA small subunit methyltransferase G (201 aa).

S-adenosyl-L-methionine contacts are provided by residues G71, F76, L120–E121, and R134.

The protein belongs to the methyltransferase superfamily. RNA methyltransferase RsmG family.

Its subcellular location is the cytoplasm. The enzyme catalyses guanosine(527) in 16S rRNA + S-adenosyl-L-methionine = N(7)-methylguanosine(527) in 16S rRNA + S-adenosyl-L-homocysteine. Its function is as follows. Specifically methylates the N7 position of guanine in position 527 of 16S rRNA. The protein is Ribosomal RNA small subunit methyltransferase G of Rhodospirillum rubrum (strain ATCC 11170 / ATH 1.1.1 / DSM 467 / LMG 4362 / NCIMB 8255 / S1).